Here is a 599-residue protein sequence, read N- to C-terminus: Riboflavin biosynthesis protein PYRR, chloroplastic (599 aa).

The N-terminal 17 residues, 1–17, are a transit peptide targeting the chloroplast; that stretch reads MALSFRISSSSPLICRA. Residues 30-152 form the CMP/dCMP-type deaminase domain; it reads TTDAAFIRRA…ELRSHGIEVN (123 aa).

In the C-terminal section; belongs to the YbiA family.

The protein resides in the plastid. It is found in the chloroplast. It catalyses the reaction 5-amino-6-(5-phospho-D-ribitylamino)uracil + NADP(+) = 5-amino-6-(5-phospho-D-ribosylamino)uracil + NADPH + H(+). The enzyme catalyses 2,5-diamino-6-hydroxy-4-(5-phosphoribosylamino)-pyrimidine + H2O = 2,5,6-triamino-4-hydroxypyrimidine + D-ribose 5-phosphate. The catalysed reaction is 5-amino-6-(5-phospho-D-ribosylamino)uracil + H2O = 5,6-diaminouracil + D-ribose 5-phosphate. It participates in cofactor biosynthesis; riboflavin biosynthesis; 5-amino-6-(D-ribitylamino)uracil from GTP: step 3/4. In terms of biological role, pyrimidine reductase involved in the riboflavin biosynthesis pathway. Also has a non-functional N-terminal deaminase domain that lacks the catalytically essential zinc-binding residues. Its function is as follows. Catalyzes the hydrolysis of the N-glycosidic bond in the first two intermediates of riboflavin biosynthesis, which are highly reactive metabolites, yielding relatively innocuous products. Thus, can divert a surplus of harmful intermediates into relatively harmless products and pre-empt the damage these intermediates would otherwise do. Helps maintain flavin levels. Has no activity against GTP, nucleoside monophosphates or ADP-ribose. The chain is Riboflavin biosynthesis protein PYRR, chloroplastic (PYRR) from Arabidopsis thaliana (Mouse-ear cress).